The primary structure comprises 383 residues: Serine protease 23 (383 aa).

Positions 1 to 19 (MAGIPGLLFLLFFLLCAVG) are cleaved as a signal peptide. N93 carries N-linked (GlcNAc...) asparagine glycosylation. Phosphoserine; by FAM20C is present on S109. C160 and C176 are disulfide-bonded. The Charge relay system role is filled by H175. A glycan (N-linked (GlcNAc...) asparagine) is linked at N207. Active-site charge relay system residues include D240 and S316.

This sequence belongs to the peptidase S1 family.

The protein resides in the secreted. This chain is Serine protease 23 (PRSS23), found in Homo sapiens (Human).